Reading from the N-terminus, the 337-residue chain is C5a anaphylatoxin chemotactic receptor 2 (337 aa).

The Extracellular segment spans residues 1 to 38 (MGNDSVSYEYGDYSDLSDRPVDCLDGACLAIDPLRVAP). The N-linked (GlcNAc...) asparagine glycan is linked to asparagine 3. A helical transmembrane segment spans residues 39–61 (LPLYAAIFLVGVPGNAMVAWVAG). Topologically, residues 62 to 72 (KVARRRVGATW) are cytoplasmic. The helical transmembrane segment at 73–95 (LLHLAVADLLCCLSLPILAVPIA) threads the bilayer. The Extracellular segment spans residues 96 to 114 (RGGHWPYGAVGCRALPSII). A disulfide bridge connects residues cysteine 107 and cysteine 186. A helical membrane pass occupies residues 115-137 (LLTMYASVLLLAALSADLCFLAL). Over 138-149 (GPAWWSTVQRAC) the chain is Cytoplasmic. The chain crosses the membrane as a helical span at residues 150–172 (GVQVACGAAWTLALLLTVPSAIY). The Extracellular segment spans residues 173-202 (RRLHQEHFPARLQCVVDYGGSSSTENAVTA). The helical transmembrane segment at 203 to 225 (IRFLFGFLGPLVAVASCHSALLC) threads the bilayer. The Cytoplasmic segment spans residues 226 to 237 (WAARRCRPLGTA). Residues 238–260 (IVVGFFVCWAPYHLLGLVLTVAA) traverse the membrane as a helical segment. At 261 to 274 (PNSALLARALRAEP) the chain is on the extracellular side. Residues 275–294 (LIVGLALAHSCLNPMLFLYF) traverse the membrane as a helical segment. At 295–337 (GRAQLRRSLPAACHWALRESQGQDESVDSKKSTSHDLVSEMEV) the chain is on the cytoplasmic side. Serine 320 is modified (phosphoserine).

This sequence belongs to the G-protein coupled receptor 1 family. As to quaternary structure, interacts with C3 (the anaphylatoxin peptide C3a and the adipogenic hormone ASP); the interaction occurs with higher affinity for ASP, enhancing the phosphorylation and activation of GPR77, recruitment of ARRB2 to the cell surface and endocytosis of GRP77. Frontal cortex, hippocampus, hypothalamus, pons and liver.

The protein localises to the cell membrane. Its function is as follows. Receptor for the chemotactic and inflammatory C3a, C4a and C5a anaphylatoxin peptides and also for their dearginated forms ASP/C3adesArg, C4adesArg and C5adesArg respectively. Couples weakly to G(i)-mediated signaling pathways. The chain is C5a anaphylatoxin chemotactic receptor 2 (C5AR2) from Homo sapiens (Human).